We begin with the raw amino-acid sequence, 328 residues long: MCSTSVYDLEDIPLEDDDPNSIEFKILAFYARHHVFKNTPAVFSPKLSRTRSLSQKALGTWSTDSWTQVSLPCRGSPSSEKNISLGKKKSSWRTLFRVAEKEEGLPSSPKEIRAQGPQGPFPVERQSGFHNQHWPRSLSSVEQRLESEVVDSKVACIANRVAEIVYSWPPPDVIHSQGGSKLKERVSEILYFRFEGPCDSKNKDGEDQIISKIVELLKFSGDQLGREIKKDKALMSSFQDGLSYSTFKTITDLFLRDVDTRGESEVKARGFKAALAIDAIAKLTAIDNHPMNRMLGFGTKYLREYFSPWVQQNGGWEKILGISHEEVD.

At Ser44 the chain carries Phosphoserine. A BH3 motif is present at residues 213–227 (IVELLKFSGDQLGRE). The short motif at 309–316 (WVQQNGGW) is the BH2 element.

It belongs to the Bcl-2 family. Phosphorylated by MELK, leading to inhibit its pro-apoptotic function.

The protein resides in the cytoplasm. Its function is as follows. Plays a role in apoptosis. In Mus musculus (Mouse), this protein is Apoptosis facilitator Bcl-2-like protein 14 (Bcl2l14).